Reading from the N-terminus, the 420-residue chain is Isocitrate dehydrogenase [NADP] (420 aa).

NADP(+) is bound by residues 75–77 and Arg-82; that span reads TIT. Residue Thr-77 participates in substrate binding. Residues 94-100, Arg-109, and Arg-132 contribute to the substrate site; that span reads SPNGTIR. Asp-252 lines the Mn(2+) pocket. Residue Lys-260 coordinates NADP(+). Position 275 (Asp-275) interacts with Mn(2+). Residues 310 to 315 and Asn-328 each bind NADP(+); that span reads GTVTRH.

This sequence belongs to the isocitrate and isopropylmalate dehydrogenases family. It depends on Mg(2+) as a cofactor. Mn(2+) serves as cofactor.

The enzyme catalyses D-threo-isocitrate + NADP(+) = 2-oxoglutarate + CO2 + NADPH. Its function is as follows. May function in the production of NADPH for fatty acid and sterol synthesis. The chain is Isocitrate dehydrogenase [NADP] (IDP3) from Saccharomyces cerevisiae (strain ATCC 204508 / S288c) (Baker's yeast).